We begin with the raw amino-acid sequence, 180 residues long: Cytokinin-beta-glucosidase 2 (180 aa).

Its function is as follows. Hydrolyzes cytokinin glucosides thus liberating free cytokinins. In Linaria vulgaris (Toadflax), this protein is Cytokinin-beta-glucosidase 2 (ROLC2).